The primary structure comprises 1140 residues: Eukaryotic translation initiation factor 3 subunit A (1140 aa).

The PCI domain maps to 319 to 502 (LQRMAAHVLL…HCIYFGTDLT (184 aa)). 6 stretches are compositionally biased toward basic and acidic residues: residues 590–624 (NNAREEEEARRQEEESRKAKLAEQKRLEQEQEERE), 826–903 (RMAQ…RPEG), 925–965 (DRAD…KDNE), 1000–1019 (SRDDKWRRGGDRERDRDFRN), 1026–1053 (RGGDREDDRDRGGFRRNDGPRRNEEQQR), and 1061–1087 (DAPRQSDNRDNRRPAGGDRRDRDRDVR). Disordered regions lie at residues 590–632 (NNAR…QNEI) and 826–1140 (RMAQ…VKRR). Residues 1091–1101 (PKEGGGGGGGN) are compositionally biased toward gly residues. Over residues 1108-1130 (PRDEKPTTKQRDQPQDKENKAGD) the composition is skewed to basic and acidic residues.

The protein belongs to the eIF-3 subunit A family. Component of the eukaryotic translation initiation factor 3 (eIF-3) complex. The eIF-3 complex interacts with pix.

The protein localises to the cytoplasm. RNA-binding component of the eukaryotic translation initiation factor 3 (eIF-3) complex, which is involved in protein synthesis of a specialized repertoire of mRNAs and, together with other initiation factors, stimulates binding of mRNA and methionyl-tRNAi to the 40S ribosome. The eIF-3 complex specifically targets and initiates translation of a subset of mRNAs involved in cell proliferation. In Drosophila willistoni (Fruit fly), this protein is Eukaryotic translation initiation factor 3 subunit A.